A 516-amino-acid polypeptide reads, in one-letter code: Maturase K (516 aa).

It belongs to the intron maturase 2 family. MatK subfamily.

It localises to the plastid. It is found in the chloroplast. Its function is as follows. Usually encoded in the trnK tRNA gene intron. Probably assists in splicing its own and other chloroplast group II introns. This chain is Maturase K, found in Chara globularis (Fragile stonewort).